The following is a 185-amino-acid chain: Elongation factor P (185 aa).

It belongs to the elongation factor P family.

Its subcellular location is the cytoplasm. It functions in the pathway protein biosynthesis; polypeptide chain elongation. Its function is as follows. Involved in peptide bond synthesis. Stimulates efficient translation and peptide-bond synthesis on native or reconstituted 70S ribosomes in vitro. Probably functions indirectly by altering the affinity of the ribosome for aminoacyl-tRNA, thus increasing their reactivity as acceptors for peptidyl transferase. The polypeptide is Elongation factor P (Deinococcus deserti (strain DSM 17065 / CIP 109153 / LMG 22923 / VCD115)).